A 352-amino-acid chain; its full sequence is Thymidine kinase (352 aa).

Gly32–Ser39 contributes to the ATP binding site. Glu60 serves as the catalytic Proton acceptor. Residues Tyr78 and Gln102 each coordinate substrate. Arg192 lines the ATP pocket. Arg198 serves as a coordination point for substrate.

This sequence belongs to the herpesviridae thymidine kinase family. Homodimer.

The enzyme catalyses thymidine + ATP = dTMP + ADP + H(+). Functionally, catalyzes the transfer of the gamma-phospho group of ATP to thymidine to generate dTMP in the salvage pathway of pyrimidine synthesis. The dTMP serves as a substrate for DNA polymerase during viral DNA replication. Allows the virus to be reactivated and to grow in non-proliferative cells lacking a high concentration of phosphorylated nucleic acid precursors. This chain is Thymidine kinase, found in Equus caballus (Horse).